Here is a 189-residue protein sequence, read N- to C-terminus: MIQPEEAERLRGVTVYLIGMMASGKSTLGAELAAQLRRPFFDTDALVEQVAGCSIAQIFAEQGEAHFRELETQVLAQLSGYTRLVVATGGGIVLRPKNWSYLHHGLTVWLDAAPELIWQRLKRDPGQRPLLQTPDPQAALQRLMQEREPFYAQADVRVPIHSEASPSQLAEQVWQAICARLRAQPPCNR.

Residue 22 to 27 coordinates ATP; it reads ASGKST. S26 is a Mg(2+) binding site. Positions 44, 68, and 90 each coordinate substrate. Residue R128 coordinates ATP. R147 is a binding site for substrate.

It belongs to the shikimate kinase family. As to quaternary structure, monomer. It depends on Mg(2+) as a cofactor.

The protein resides in the cytoplasm. The catalysed reaction is shikimate + ATP = 3-phosphoshikimate + ADP + H(+). Its pathway is metabolic intermediate biosynthesis; chorismate biosynthesis; chorismate from D-erythrose 4-phosphate and phosphoenolpyruvate: step 5/7. Its function is as follows. Catalyzes the specific phosphorylation of the 3-hydroxyl group of shikimic acid using ATP as a cosubstrate. The chain is Shikimate kinase from Synechococcus sp. (strain JA-3-3Ab) (Cyanobacteria bacterium Yellowstone A-Prime).